A 517-amino-acid chain; its full sequence is Serine hydroxymethyltransferase 1, mitochondrial (517 aa).

Residues 1-31 constitute a mitochondrion transit peptide; that stretch reads MAMALALRRLSSSADKPLQRLFNGGHLYSMS. An N6-(pyridoxal phosphate)lysine modification is found at K287.

The protein belongs to the SHMT family. Homotetramer. Pyridoxal 5'-phosphate serves as cofactor.

The protein resides in the mitochondrion. The catalysed reaction is (6R)-5,10-methylene-5,6,7,8-tetrahydrofolate + glycine + H2O = (6S)-5,6,7,8-tetrahydrofolate + L-serine. It participates in one-carbon metabolism; tetrahydrofolate interconversion. Functionally, catalyzes the interconversion of serine and glycine. This Flaveria pringlei protein is Serine hydroxymethyltransferase 1, mitochondrial.